A 296-amino-acid chain; its full sequence is MGSSSSMWTVCVILASLASAALCANPRRPVDVQFGRNYVPTWAFDHIKYFNGGSDIQPHLDKYTGTGFQPKGSYLFGHFSMYIKMVPGDSAGTVTAFYLSSQNAEHDEIDFEFLGNRTGQPYILQTNVFTGGKGDREQRIYLWFDPTKEYHRYSILWNLYQIVFFVDEVPIRVFKNSKDLGVKFPFDQPMKIYNSLWNADDWATRGGLEKTDWSKAPFIAAYKGFHIDGCEASVNAKFCDTQGKRWWDQPEFRDLDAAQWRRLRWVRQKYTIYNYCTDTKRYPHISPPECKRDRDI.

Residues 1–23 (MGSSSSMWTVCVILASLASAALC) form the signal peptide. In terms of domain architecture, GH16 spans 24–222 (ANPRRPVDVQ…WSKAPFIAAY (199 aa)). Glutamate 108 serves as the catalytic Nucleophile. The Proton donor role is filled by glutamate 112. Position 112 (glutamate 112) interacts with xyloglucan. An N-linked (GlcNAc...) asparagine glycan is attached at asparagine 116. Xyloglucan is bound by residues 125–127 (QTN), 135–137 (DRE), 201–202 (DW), and glycine 206. 2 cysteine pairs are disulfide-bonded: cysteine 230/cysteine 239 and cysteine 276/cysteine 290. Arginine 281 contributes to the xyloglucan binding site.

Belongs to the glycosyl hydrolase 16 family. XTH group 1 subfamily. Contains at least one intrachain disulfide bond essential for its enzymatic activity. Post-translationally, N-glycosylated; not essential for its enzymatic activity.

Its subcellular location is the secreted. It is found in the cell wall. The protein resides in the extracellular space. The protein localises to the apoplast. It catalyses the reaction breaks a beta-(1-&gt;4) bond in the backbone of a xyloglucan and transfers the xyloglucanyl segment on to O-4 of the non-reducing terminal glucose residue of an acceptor, which can be a xyloglucan or an oligosaccharide of xyloglucan.. Its function is as follows. Catalyzes xyloglucan endohydrolysis (XEH) and/or endotransglycosylation (XET). Cleaves and religates xyloglucan polymers, an essential constituent of the primary cell wall, and thereby participates in cell wall construction of growing tissues. The chain is Xyloglucan endotransglucosylase/hydrolase 1 from Glycine max (Soybean).